Reading from the N-terminus, the 253-residue chain is Testis-expressed protein 47 (253 aa).

The chain is Testis-expressed protein 47 (Tex47) from Mus musculus (Mouse).